An 844-amino-acid polypeptide reads, in one-letter code: MSKRGMSSRAKGDKAEALAALQAANEDLRAKLTDIQIELQQEKSKVSKVEREKNQELRQVREHEQHKTAVLLTELKTKLHEEKMKELQAVRETLLRQHEAELLRVIKIKDNENQRLQALLSALRDGGPEKVKTVLLSEAKEEAKKGFEVEKVKMQQEISELKGAKRQVEEALTLVIQADKIKAAEIRSVYHLHQEEITRIKKECEREIRRLMEEIKFKDRAVFVLERELGVQAGHAQRLQLQKEALDEQLSQVREADRHPGSPRRELPHAAGAGDASDHSGSPEQQLDEKDARRFQLKIAELSAIIRKLEDRNALLSEERNELLKRVREAESQYKPLLDKNKRLSRKNEDLSHALRRMENKLKFVTQENIEMRQRAGIIRRPSSLNDLDQSQDEREVDFLKLQIVEQQNLIDELSKTLETAGYVKSVLERDKLLRFRKQRKKMAKLPKPVVVETFFGYDEEASLESDGSSVSYQTDRTDQTPCTPDDDLEEGMAKEETELRFRQLTMEYQALQRAYALLQEQVGGTLDAEREVKTREQLQAEVQRAQARIEDLEKALAEQGQDMKWIEEKQALYRRNQELVEKIKQMETEEARLRHEVQDARDQNELLEFRILELEERERKSPAISFHHTPFVDGKSPLQVYCEAEGVTDIVVAELMKKLDILGDNANLTNEEQVVVIQARTVLTLAEKWLQQIEETEAALQRKMVDLESEKELFSKQKGYLDEELDYRKQALDQANKHILELEAMLYDALQQEAGAKVAELLSEEEREKLKVAVEQWKRQVMSELRERDAQILRERMELLQLAQQRIKELEERIEAQKRQIKELEEKFLFLFLFFSLAFILWS.

The stretch at S8–R258 forms a coiled coil. Positions L250–K290 are disordered. A compositionally biased stretch (basic and acidic residues) spans R254 to P268. The segment covering H269–S282 has biased composition (low complexity). A coiled-coil region spans residues E289–A421. S384 bears the Phosphoserine mark. The segment covering S466 to C483 has biased composition (polar residues). The segment at S466–L489 is disordered. Coiled-coil stretches lie at residues M493 to K621 and V683 to L834.

This sequence belongs to the JAKMIP family. In terms of tissue distribution, specifically expressed in the CNS and endocrine tissues. Also detected in other tissues including heart, testis and prostate.

The protein localises to the golgi apparatus. The protein is Janus kinase and microtubule-interacting protein 3 (JAKMIP3) of Homo sapiens (Human).